Consider the following 319-residue polypeptide: Acetyl esterase (319 aa).

Residues His91–Gly93 carry the Involved in the stabilization of the negatively charged intermediate by the formation of the oxyanion hole motif. Residues Ser165, Asp262, and His292 contribute to the active site.

This sequence belongs to the 'GDXG' lipolytic enzyme family. In terms of assembly, homodimer. Interacts with MalT and MelA.

The protein resides in the cytoplasm. Displays esterase activity towards short chain fatty esters (acyl chain length of up to 8 carbons). Able to hydrolyze triacetylglycerol (triacetin) and tributyrylglycerol (tributyrin), but not trioleylglycerol (triolein) or cholesterol oleate. Negatively regulates MalT activity by antagonizing maltotriose binding. Inhibits MelA galactosidase activity. This chain is Acetyl esterase, found in Escherichia coli O6:H1 (strain CFT073 / ATCC 700928 / UPEC).